The chain runs to 237 residues: Dihydroceramide fatty acyl 2-hydroxylase FAH2 (237 aa).

The next 2 helical transmembrane spans lie at Val-54–Ala-74 and Gly-77–Leu-97. Zn(2+)-binding residues include His-102, His-107, His-123, His-126, and His-127. A run of 2 helical transmembrane segments spans residues Leu-134–Leu-154 and Leu-156–Met-176. Zn(2+)-binding residues include His-181, His-185, His-201, His-204, and His-205.

The protein belongs to the sterol desaturase family. As to quaternary structure, interacts with CYTB5-A, CYTB5-B, CYTB5-C and CYTB5-D. The cofactor is Zn(2+). As to expression, expressed in leaves, roots, flowers and seeds.

Its subcellular location is the endoplasmic reticulum membrane. The enzyme catalyses an N-(1,2-saturated acyl)sphinganine + 2 Fe(II)-[cytochrome b5] + O2 + 2 H(+) = an N-[(2'R)-hydroxyacyl]sphinganine + 2 Fe(III)-[cytochrome b5] + H2O. Functionally, fatty acid 2-hydroxylase involved in the alpha-hydroxylation of the long-chain fatty acid (LCFA) palmitic acid. Probably involved in the resistance response to oxidative stress. The protein is Dihydroceramide fatty acyl 2-hydroxylase FAH2 of Arabidopsis thaliana (Mouse-ear cress).